A 596-amino-acid polypeptide reads, in one-letter code: Elongation factor 4 (596 aa).

A tr-type G domain is found at 2–184 (KHIRNFSIIA…TIVAQIPSPE (183 aa)). Residues 14–19 (DHGKST) and 131–134 (NKID) contribute to the GTP site.

Belongs to the TRAFAC class translation factor GTPase superfamily. Classic translation factor GTPase family. LepA subfamily.

It localises to the cell inner membrane. It catalyses the reaction GTP + H2O = GDP + phosphate + H(+). In terms of biological role, required for accurate and efficient protein synthesis under certain stress conditions. May act as a fidelity factor of the translation reaction, by catalyzing a one-codon backward translocation of tRNAs on improperly translocated ribosomes. Back-translocation proceeds from a post-translocation (POST) complex to a pre-translocation (PRE) complex, thus giving elongation factor G a second chance to translocate the tRNAs correctly. Binds to ribosomes in a GTP-dependent manner. In Shewanella amazonensis (strain ATCC BAA-1098 / SB2B), this protein is Elongation factor 4.